Reading from the N-terminus, the 432-residue chain is Bifunctional protein GlmU (432 aa).

The pyrophosphorylase stretch occupies residues 1–223; sequence MGKKSIIILA…EENFKGVNSK (223 aa). UDP-N-acetyl-alpha-D-glucosamine contacts are provided by residues 9 to 12, lysine 23, glutamine 75, and 82 to 83; these read LAAG and GT. Aspartate 103 lines the Mg(2+) pocket. Positions 135, 149, 164, and 221 each coordinate UDP-N-acetyl-alpha-D-glucosamine. Asparagine 221 provides a ligand contact to Mg(2+). The linker stretch occupies residues 224–244; the sequence is VELADAEVIHQNRIKKEFMKA. Positions 245–432 are N-acetyltransferase; the sequence is GVIMRLPDTI…FYKHFSSKKK (188 aa). UDP-N-acetyl-alpha-D-glucosamine-binding residues include arginine 308 and lysine 325. The active-site Proton acceptor is the histidine 336. Positions 339 and 350 each coordinate UDP-N-acetyl-alpha-D-glucosamine. Residues 359–360, serine 378, alanine 396, and arginine 413 each bind acetyl-CoA; that span reads NY.

In the N-terminal section; belongs to the N-acetylglucosamine-1-phosphate uridyltransferase family. It in the C-terminal section; belongs to the transferase hexapeptide repeat family. Homotrimer. It depends on Mg(2+) as a cofactor.

The protein localises to the cytoplasm. It carries out the reaction alpha-D-glucosamine 1-phosphate + acetyl-CoA = N-acetyl-alpha-D-glucosamine 1-phosphate + CoA + H(+). The enzyme catalyses N-acetyl-alpha-D-glucosamine 1-phosphate + UTP + H(+) = UDP-N-acetyl-alpha-D-glucosamine + diphosphate. It participates in nucleotide-sugar biosynthesis; UDP-N-acetyl-alpha-D-glucosamine biosynthesis; N-acetyl-alpha-D-glucosamine 1-phosphate from alpha-D-glucosamine 6-phosphate (route II): step 2/2. The protein operates within nucleotide-sugar biosynthesis; UDP-N-acetyl-alpha-D-glucosamine biosynthesis; UDP-N-acetyl-alpha-D-glucosamine from N-acetyl-alpha-D-glucosamine 1-phosphate: step 1/1. Its pathway is bacterial outer membrane biogenesis; LPS lipid A biosynthesis. Functionally, catalyzes the last two sequential reactions in the de novo biosynthetic pathway for UDP-N-acetylglucosamine (UDP-GlcNAc). The C-terminal domain catalyzes the transfer of acetyl group from acetyl coenzyme A to glucosamine-1-phosphate (GlcN-1-P) to produce N-acetylglucosamine-1-phosphate (GlcNAc-1-P), which is converted into UDP-GlcNAc by the transfer of uridine 5-monophosphate (from uridine 5-triphosphate), a reaction catalyzed by the N-terminal domain. In Aliarcobacter butzleri (strain RM4018) (Arcobacter butzleri), this protein is Bifunctional protein GlmU.